We begin with the raw amino-acid sequence, 137 residues long: Large ribosomal subunit protein uL16c (137 aa).

This sequence belongs to the universal ribosomal protein uL16 family. As to quaternary structure, part of the 50S ribosomal subunit.

Its subcellular location is the plastid. It localises to the chloroplast. The chain is Large ribosomal subunit protein uL16c from Bigelowiella natans (Pedinomonas minutissima).